A 300-amino-acid polypeptide reads, in one-letter code: Dihydroorotate dehydrogenase B (NAD(+)), catalytic subunit (300 aa).

FMN is bound by residues Ser20 and 44 to 45; that span reads KG. Substrate contacts are provided by residues Lys44 and 68-72; that span reads NSVGL. Residues Asn98 and Asn124 each coordinate FMN. Substrate is bound at residue Asn124. The active-site Nucleophile is Cys127. FMN is bound by residues Lys162 and Ile188. 189–190 contacts substrate; sequence NT. FMN contacts are provided by residues Gly214, 240–241, and 262–263; these read GG and GT.

Belongs to the dihydroorotate dehydrogenase family. Type 1 subfamily. Heterotetramer of 2 PyrK and 2 PyrD type B subunits. The cofactor is FMN.

Its subcellular location is the cytoplasm. It carries out the reaction (S)-dihydroorotate + NAD(+) = orotate + NADH + H(+). The protein operates within pyrimidine metabolism; UMP biosynthesis via de novo pathway; orotate from (S)-dihydroorotate (NAD(+) route): step 1/1. In terms of biological role, catalyzes the conversion of dihydroorotate to orotate with NAD(+) as electron acceptor. This is Dihydroorotate dehydrogenase B (NAD(+)), catalytic subunit (pyrD) from Caldicellulosiruptor saccharolyticus (strain ATCC 43494 / DSM 8903 / Tp8T 6331).